We begin with the raw amino-acid sequence, 409 residues long: Salivary endonuclease (409 aa).

The N-terminal stretch at 1–20 (MHLQLNLCAILLSVLNGIQG) is a signal peptide. N37 and N102 each carry an N-linked (GlcNAc...) asparagine glycan. The Proton acceptor role is filled by H216. N246 lines the Mg(2+) pocket. Residues N351 and N381 are each glycosylated (N-linked (GlcNAc...) asparagine).

The protein belongs to the DNA/RNA non-specific endonuclease family. Requires Mg(2+) as cofactor. As to expression, salivary gland.

It localises to the secreted. Its function is as follows. Hydrolyzes single-stranded and double-stranded DNA with little sequence specificity. Inhibits contact pathway of blood coagulation in the host by preventing activation of coagulation factor XII (F12) triggered by soluble DNA. Modestly up-regulates expression of CSF2, CXCL1 and CXCL8 in cultured human dermal microvascular endothelial cells. At higher doses promotes host neutrophil recruitment at the injection site in mouse model. Functionally, (Microbial infection) Increases Leishmania major survival in the host by disrupting parasite-induced neutrophil extracellular traps. Exacerbates L.major parasite infectivity and increases cutaneous lesions in mouse model. The polypeptide is Salivary endonuclease (Lutzomyia longipalpis (Sand fly)).